The chain runs to 113 residues: uncharacterized protein (113 aa).

Residues 4–26 (VLFKIAVALLYLLSFFLHRLHLR) form a helical membrane-spanning segment. The interval 32 to 74 (RRRRRRHHRRHHRRHHHHRRRRRRRRRRRRRHHRHHHHRHRRR) is disordered.

It is found in the membrane. This is an uncharacterized protein from Saccharomyces cerevisiae (strain ATCC 204508 / S288c) (Baker's yeast).